The chain runs to 477 residues: Glycogen synthase (477 aa).

Lys15 contacts ADP-alpha-D-glucose.

This sequence belongs to the glycosyltransferase 1 family. Bacterial/plant glycogen synthase subfamily.

The enzyme catalyses [(1-&gt;4)-alpha-D-glucosyl](n) + ADP-alpha-D-glucose = [(1-&gt;4)-alpha-D-glucosyl](n+1) + ADP + H(+). Its pathway is glycan biosynthesis; glycogen biosynthesis. Functionally, synthesizes alpha-1,4-glucan chains using ADP-glucose. This Clostridium acetobutylicum (strain ATCC 824 / DSM 792 / JCM 1419 / IAM 19013 / LMG 5710 / NBRC 13948 / NRRL B-527 / VKM B-1787 / 2291 / W) protein is Glycogen synthase.